Consider the following 383-residue polypeptide: tRNA-specific 2-thiouridylase MnmA (383 aa).

Residues 6–13 (AMSGGVDS) and Leu-32 each bind ATP. Catalysis depends on Cys-101, which acts as the Nucleophile. Cys-101 and Cys-199 form a disulfide bridge. Gly-125 provides a ligand contact to ATP. The segment at 148–150 (KDQ) is interaction with tRNA. Residue Cys-199 is the Cysteine persulfide intermediate of the active site.

It belongs to the MnmA/TRMU family.

The protein resides in the cytoplasm. The enzyme catalyses S-sulfanyl-L-cysteinyl-[protein] + uridine(34) in tRNA + AH2 + ATP = 2-thiouridine(34) in tRNA + L-cysteinyl-[protein] + A + AMP + diphosphate + H(+). In terms of biological role, catalyzes the 2-thiolation of uridine at the wobble position (U34) of tRNA, leading to the formation of s(2)U34. The sequence is that of tRNA-specific 2-thiouridylase MnmA from Kocuria rhizophila (strain ATCC 9341 / DSM 348 / NBRC 103217 / DC2201).